We begin with the raw amino-acid sequence, 309 residues long: Methionyl-tRNA formyltransferase (309 aa).

Residue 107–110 coordinates (6S)-5,6,7,8-tetrahydrofolate; the sequence is SLLP.

The protein belongs to the Fmt family.

It catalyses the reaction L-methionyl-tRNA(fMet) + (6R)-10-formyltetrahydrofolate = N-formyl-L-methionyl-tRNA(fMet) + (6S)-5,6,7,8-tetrahydrofolate + H(+). Attaches a formyl group to the free amino group of methionyl-tRNA(fMet). The formyl group appears to play a dual role in the initiator identity of N-formylmethionyl-tRNA by promoting its recognition by IF2 and preventing the misappropriation of this tRNA by the elongation apparatus. This is Methionyl-tRNA formyltransferase from Borrelia duttonii (strain Ly).